Reading from the N-terminus, the 467-residue chain is Thiohydroximate-O-sulfate sulfur/sulfate-lyase (nitrile-forming) NSP3 (467 aa).

Residues Ala-2 to Leu-143 enclose the Jacalin-type lectin domain. Kelch repeat units follow at residues Lys-177–Val-225, Thr-230–Ala-276, Asn-280–Gly-329, Val-331–Ala-375, and His-379–Thr-434. The active-site Proton donor is Arg-237. Positions 237, 270, 292, 321, and 370 each coordinate a (Z)-N-(sulfonatooxy)alkanimidothioate. Catalysis depends on Arg-292, which acts as the Proton donor. Fe(2+)-binding residues include Glu-386, Asp-390, and His-394. An a (Z)-N-(sulfonatooxy)alkanimidothioate-binding site is contributed by Trp-429.

Belongs to the jacalin lectin family. Fe(2+) is required as a cofactor. As to expression, mainly expressed in roots, and, at low levels, in seedlings and leaves. Observed in seeds.

It carries out the reaction a (Z)-N-(sulfonatooxy)alkanimidothioate = a nitrile + sulfur + sulfate. It catalyses the reaction (Z)-phenyl-N-(sulfonatooxy)methanimidothioate = phenylacetonitrile + sulfur + sulfate. The enzyme catalyses (Z)-N-(sulfonatooxy)prop-2-enimidothioate = but-3-enenitrile + sulfur + sulfate. In terms of biological role, specifier protein responsible for constitutive and herbivore-induced simple nitrile formation, especially in roots. Promotes simple nitriles, but not epithionitrile or thiocyanate formation. Converts allylglucosinolate and benzylglucosinolate (glucotropaeolin) to their corresponding simple nitriles in the presence of myrosinase. The protein is Thiohydroximate-O-sulfate sulfur/sulfate-lyase (nitrile-forming) NSP3 of Arabidopsis thaliana (Mouse-ear cress).